Reading from the N-terminus, the 388-residue chain is Methylthioribose-1-phosphate isomerase (388 aa).

The Proton donor role is filled by Asp258.

It belongs to the eIF-2B alpha/beta/delta subunits family. MtnA subfamily.

Its subcellular location is the cytoplasm. It is found in the nucleus. The enzyme catalyses 5-(methylsulfanyl)-alpha-D-ribose 1-phosphate = 5-(methylsulfanyl)-D-ribulose 1-phosphate. It participates in amino-acid biosynthesis; L-methionine biosynthesis via salvage pathway; L-methionine from S-methyl-5-thio-alpha-D-ribose 1-phosphate: step 1/6. Functionally, catalyzes the interconversion of methylthioribose-1-phosphate (MTR-1-P) into methylthioribulose-1-phosphate (MTRu-1-P). The chain is Methylthioribose-1-phosphate isomerase from Sordaria macrospora (strain ATCC MYA-333 / DSM 997 / K(L3346) / K-hell).